Consider the following 247-residue polypeptide: Oil body-associated protein 2B (247 aa).

The segment at 1-28 is disordered; that stretch reads MASSDKVPVACPASSGDGKEPMGNPTKT.

The protein belongs to the OBAP family.

This is Oil body-associated protein 2B from Arabidopsis thaliana (Mouse-ear cress).